The chain runs to 490 residues: Muscarinic acetylcholine receptor M4 (490 aa).

Residues 1-42 lie on the Extracellular side of the membrane; the sequence is MHNLSAQPWQAKMANLTYDNVTLSNRSEVAIQPPTNYKTVEL. 4 N-linked (GlcNAc...) asparagine glycosylation sites follow: asparagine 3, asparagine 15, asparagine 20, and asparagine 25. A helical membrane pass occupies residues 43–64; that stretch reads VFIATVTGSLSLVTVVGNILVM. Topologically, residues 65-78 are cytoplasmic; that stretch reads LSIKVNRQLQTVNN. A helical membrane pass occupies residues 79-99; it reads YFLFSLACADLIIGVFSMNLY. The Extracellular portion of the chain corresponds to 100–116; sequence TVYIIKGYWPLGAVVCD. Cysteine 115 and cysteine 195 are disulfide-bonded. Residues 117-138 form a helical membrane-spanning segment; the sequence is LWLALDYVVSNASVMNLLIISF. Residues 139-158 are Cytoplasmic-facing; it reads DRYFCVTKPLTYPARRTTKM. The chain crosses the membrane as a helical span at residues 159–181; sequence AGLMIAAAWILSFILWAPAILFW. The Extracellular segment spans residues 182 to 203; sequence QFIVGKRTVHERECYIQFLSNP. A helical transmembrane segment spans residues 204 to 226; the sequence is AVTFGTAIAAFYLPVVIMTVLYI. The Cytoplasmic portion of the chain corresponds to 227-412; the sequence is HISLASRSRV…AAREKKVTRT (186 aa). A compositionally biased stretch (basic residues) spans 236-250; it reads VRRHKPESRKERKGK. The disordered stretch occupies residues 236–343; that stretch reads VRRHKPESRK…HPRVNPTSKW (108 aa). Residues 270 to 285 are compositionally biased toward basic and acidic residues; that stretch reads RAVEVKEEVRNGKVDD. Composition is skewed to polar residues over residues 287 to 296 and 304 to 314; these read PSAQTEATGQ and NESSTVSMTQT. The chain crosses the membrane as a helical span at residues 413–433; that stretch reads IFAILLAFILTWTPYNVMVLI. Residues 434–447 are Extracellular-facing; that stretch reads NTFCETCVPETVWS. A helical transmembrane segment spans residues 448–467; it reads IGYWLCYVNSTINPACYALC. Residues 468-490 are Cytoplasmic-facing; sequence NATFKKTFKHLLMCQYRNIGTAR.

This sequence belongs to the G-protein coupled receptor 1 family. Muscarinic acetylcholine receptor subfamily. CHRM4 sub-subfamily. As to expression, expressed in heart and brain.

Its subcellular location is the cell membrane. It is found in the postsynaptic cell membrane. Functionally, the muscarinic acetylcholine receptor mediates various cellular responses, including inhibition of adenylate cyclase, breakdown of phosphoinositides and modulation of potassium channels through the action of G proteins. Primary transducing effect is inhibition of adenylate cyclase. May couple to multiple functional responses in cell lines. The sequence is that of Muscarinic acetylcholine receptor M4 (CHRM4) from Gallus gallus (Chicken).